The primary structure comprises 469 residues: Uronate isomerase (469 aa).

It belongs to the metallo-dependent hydrolases superfamily. Uronate isomerase family.

The enzyme catalyses D-glucuronate = D-fructuronate. It catalyses the reaction aldehydo-D-galacturonate = keto-D-tagaturonate. The protein operates within carbohydrate metabolism; pentose and glucuronate interconversion. The protein is Uronate isomerase of Rhizobium meliloti (strain 1021) (Ensifer meliloti).